The sequence spans 163 residues: Zinc finger A20 and AN1 domain-containing stress-associated protein 3 (163 aa).

The A20-type zinc finger occupies 7–41 (LQEPRLCANNCGFFGSTATQNLCSKCFRDLQHQEQ). Zn(2+)-binding residues include Cys13, Cys17, Cys29, and Cys32. The tract at residues 57–101 (VGAAASSSVSPPPPPPADSKEIVEAKSEKRAAAEPEEADGPPQDP) is disordered. Basic and acidic residues predominate over residues 74 to 89 (DSKEIVEAKSEKRAAA). Residues 98–144 (PQDPKRCLTCRRRVGITGFRCRCGFVFCGTHRYAEQHECSFDFKRMG) form an AN1-type zinc finger. Zn(2+) is bound by residues Cys104, Cys107, Cys118, Cys120, Cys125, His128, His134, and Cys136.

Its function is as follows. May be involved in environmental stress response. The polypeptide is Zinc finger A20 and AN1 domain-containing stress-associated protein 3 (SAP3) (Arabidopsis thaliana (Mouse-ear cress)).